The primary structure comprises 552 residues: Solute carrier family 22 member 6-B (552 aa).

Residues 1–16 (MAFQEILESLGGMGRY) lie on the Cytoplasmic side of the membrane. The helical transmembrane segment at 17–37 (QVIHVVLLSLPVFMLASHNLM) threads the bilayer. Residues 38–137 (QNFTAATPSH…LVCNHRRMRQ (100 aa)) are Extracellular-facing. The chain crosses the membrane as a helical span at residues 138-158 (VAQSIYMAGVLVGSILFGGLS). The Cytoplasmic portion of the chain corresponds to 159–164 (DKFGRR). A helical membrane pass occupies residues 165 to 184 (PLNIWSNLQMFVTGICAAFS). Residue Pro-185 is a topological domain, extracellular. Residues 186–206 (NYIWYCIFRFLTGVAFSGIVL) traverse the membrane as a helical segment. Topologically, residues 207–225 (NSYSLTVEWIPTGNRAFTS) are cytoplasmic. Residues 226–246 (TATGYCYTMGQLVLVGLAFII) form a helical membrane-spanning segment. Over 247-250 (RDWQ) the chain is Extracellular. A helical membrane pass occupies residues 251 to 271 (WLQLAASIPFFFYFLYSWWIP). Over 272-336 (ESGRWLVLSG…YSALDLVRTP (65 aa)) the chain is Cytoplasmic. A helical transmembrane segment spans residues 337-356 (VVRRISFCISCTWFSTSFAY). Position 357 (Tyr-357) is a topological domain, extracellular. Residues 358 to 378 (GLALDLQSFGVSIYIIQIIFG) traverse the membrane as a helical segment. Residues 379–398 (TVDIPAKFISYFITTYVGRR) are Cytoplasmic-facing. The chain crosses the membrane as a helical span at residues 399–419 (VSQAITLILAGIAILVNISVP). At 420–426 (QDFQTVR) the chain is on the extracellular side. The helical transmembrane segment at 427–447 (TAMAVFGKGCLAASFNCLYLY) threads the bilayer. Residues 448–459 (TGELYPTVIRQT) lie on the Cytoplasmic side of the membrane. The chain crosses the membrane as a helical span at residues 460–480 (GMGLGAMMARLGGIIAPLAQM). The Extracellular portion of the chain corresponds to 481 to 487 (TGDIYHS). The helical transmembrane segment at 488-508 (LPLIIFGCLPILSGIAGCFLP) threads the bilayer. At 509-552 (ETLGVPLPETIEEVESPDKQQKDVNVSAKIPLKETELYNMKTDV) the chain is on the cytoplasmic side.

Belongs to the major facilitator (TC 2.A.1) superfamily. Organic cation transporter (TC 2.A.1.19) family. In terms of processing, glycosylated. Glycosylation is necessary for proper targeting of the transporter to the plasma membrane.

Its subcellular location is the cell membrane. The protein localises to the basolateral cell membrane. It is found in the basal cell membrane. Functionally, involved in the renal elimination of endogenous and exogenous organic anions. Mediates the sodium-independent uptake of p-aminohippurate (PAH), cidofovir, adefovir, 9-(2-phosphonylmethoxyethyl) guanine (PMEG), 9-(2-phosphonylmethoxyethyl) diaminopurine (PMEDAP) and edaravone sulfate. PAH uptake is inhibited by furosemide, steviol, phorbol 12-myristate 13-acetate (PMA), calcium ionophore A23187, benzylpenicillin, furosemide, indomethacin, bumetamide, losartan, probenecid, phenol red, urate, and alpha-ketoglutarate. The sequence is that of Solute carrier family 22 member 6-B (slc22a6-b) from Xenopus laevis (African clawed frog).